The primary structure comprises 1169 residues: Rabankyrin-5 (1169 aa).

A2 is subject to N-acetylalanine. In terms of domain architecture, BTB spans 68-130; sequence SDLKIKVGDR…IYTDELEFRE (63 aa). ANK repeat units lie at residues 217–247, 255–284, 288–317, 322–362, and 366–396; these read KTEY…QLPG, NGDL…DVDM, SGWS…FVNA, AQET…NPNM, and KGRT…DLEL. A Phosphoserine modification is found at S270. The short motif at 421–423 is the NPF element; the sequence is NPF. 16 ANK repeats span residues 490-519, 542-572, 588-617, 621-650, 654-683, 687-716, 724-753, 769-798, 802-832, 836-865, 870-899, 905-934, 938-967, 971-1001, 1005-1037, and 1043-1072; these read WGET…NPNL, HLQT…ALHA, RDQT…AIND, DGQT…DINV, DGET…DMSV, KGNP…DATC, CLQT…DVNS, DGQT…NVNA, EGRT…HLNV, QGLT…GAAE, KGRN…NVNS, SKLT…KVNE, HRQT…DFAA, NGNN…DAEA, RGQS…GYPL, and DGST…RLGV. The interval 650–759 is interaction with RHOD and RAB5A; the sequence is VRTQDGETAL…DVNSPRQPGA (110 aa). The segment at 1104 to 1164 adopts an FYVE-type zinc-finger fold; the sequence is WCDGSYCYEC…VCNICFDVLT (61 aa). The Zn(2+) site is built by C1110, C1113, C1126, C1129, C1134, C1137, C1156, and C1159.

Interacts with RAB5A (in GTP-bound form). Interacts with RHOD (independent of GTP-loaded status). Interacts with EHD1. Interacts with VPS26A; the interaction is independent of EHD1 and is indicative for an association with the cargo recognition subcomplex of the retromer complex. As to expression, high expression in whole adult brain and intermediate expression in all other tissues and specific brain regions examined, including fetal brain.

Its subcellular location is the cytoplasm. It is found in the endosome membrane. It localises to the early endosome. Proposed effector of Rab5. Binds to phosphatidylinositol 3-phosphate (PI(3)P). Involved in homotypic early endosome fusion and to a lesser extent in heterotypic fusion of chlathrin-coated vesicles with early endosomes. Involved in macropinocytosis; the function is dependent on Rab5-GTP. Required for correct endosomal localization. Involved in the internalization and trafficking of activated tyrosine kinase receptors such as PDGFRB. Regulates the subcellular localization of the retromer complex in a EHD1-dependent manner. Involved in endosome-to-Golgi transport and biosynthetic transport to late endosomes and lysosomes indicative for a regulation of retromer complex-mediated retrograde transport. This is Rabankyrin-5 (ANKFY1) from Homo sapiens (Human).